We begin with the raw amino-acid sequence, 151 residues long: Transcriptional regulator MraZ (151 aa).

2 consecutive SpoVT-AbrB domains span residues 5–52 and 81–124; these read ANAI…PLSE and AVDL…DEDA.

This sequence belongs to the MraZ family. Forms oligomers.

It localises to the cytoplasm. It is found in the nucleoid. The polypeptide is Transcriptional regulator MraZ (Pseudomonas savastanoi pv. phaseolicola (strain 1448A / Race 6) (Pseudomonas syringae pv. phaseolicola (strain 1448A / Race 6))).